A 245-amino-acid chain; its full sequence is 1-(5-phosphoribosyl)-5-[(5-phosphoribosylamino)methylideneamino] imidazole-4-carboxamide isomerase (245 aa).

The active-site Proton acceptor is the aspartate 7. Aspartate 129 (proton donor) is an active-site residue.

Belongs to the HisA/HisF family.

It localises to the cytoplasm. It carries out the reaction 1-(5-phospho-beta-D-ribosyl)-5-[(5-phospho-beta-D-ribosylamino)methylideneamino]imidazole-4-carboxamide = 5-[(5-phospho-1-deoxy-D-ribulos-1-ylimino)methylamino]-1-(5-phospho-beta-D-ribosyl)imidazole-4-carboxamide. It functions in the pathway amino-acid biosynthesis; L-histidine biosynthesis; L-histidine from 5-phospho-alpha-D-ribose 1-diphosphate: step 4/9. This chain is 1-(5-phosphoribosyl)-5-[(5-phosphoribosylamino)methylideneamino] imidazole-4-carboxamide isomerase, found in Citrobacter koseri (strain ATCC BAA-895 / CDC 4225-83 / SGSC4696).